The primary structure comprises 303 residues: Ornithine carbamoyltransferase (303 aa).

Carbamoyl phosphate contacts are provided by residues 52–55 (STRT), Q79, R103, and 130–133 (HPCQ). L-ornithine-binding positions include N161, D222, and 226 to 227 (SM). Carbamoyl phosphate is bound by residues 262–263 (CL) and K290.

Belongs to the aspartate/ornithine carbamoyltransferase superfamily. OTCase family.

It is found in the cytoplasm. It catalyses the reaction carbamoyl phosphate + L-ornithine = L-citrulline + phosphate + H(+). It functions in the pathway amino-acid biosynthesis; L-arginine biosynthesis; L-arginine from L-ornithine and carbamoyl phosphate: step 1/3. Its function is as follows. Reversibly catalyzes the transfer of the carbamoyl group from carbamoyl phosphate (CP) to the N(epsilon) atom of ornithine (ORN) to produce L-citrulline. The polypeptide is Ornithine carbamoyltransferase (Desulfotalea psychrophila (strain LSv54 / DSM 12343)).